A 409-amino-acid chain; its full sequence is MQTLDRPNAPTQQPYPEPVYPRRPTRTVAVADVLIGSQHPVVVQSMINEDTLDVDAAVAGIRRLHEAGSEIVRVTVPSMAHAKAMEAIREKLIQTYKPVPLVADVHHNGIKIALEVAKYVDKVRINPGLFVFEKPQPGRTEYTQAEFEAIRNKIRETFTPLVQTLKAQNKALRIGVNHGSLAERMLFTYGDTPEGMVESALEFAQICAEQDFHNVVLSFKASRPQVMLAAYRLAARRFDALGLNYPFHLGVTEAGDGEYGRIKSAVGIGTLLAEGIGDTIRVSLTEAPEKEIPVAYGILQALNLRKTMVEYVACPSCGRTLFNLEEVLQKVRAATQHLVGLDIAVMGCIVNGPGEMADADYGYVGKTPGVISLYRGKEEVKRVPESEGVQALIDLIKADGRWVDPPSSH.

Residues 1–12 (MQTLDRPNAPTQ) are compositionally biased toward polar residues. The tract at residues 1–22 (MQTLDRPNAPTQQPYPEPVYPR) is disordered. The [4Fe-4S] cluster site is built by Cys-314, Cys-317, Cys-348, and Glu-355.

This sequence belongs to the IspG family. The cofactor is [4Fe-4S] cluster.

The catalysed reaction is (2E)-4-hydroxy-3-methylbut-2-enyl diphosphate + 2 oxidized [2Fe-2S]-[ferredoxin] + H2O = 2-C-methyl-D-erythritol 2,4-cyclic diphosphate + 2 reduced [2Fe-2S]-[ferredoxin] + H(+). It participates in isoprenoid biosynthesis; isopentenyl diphosphate biosynthesis via DXP pathway; isopentenyl diphosphate from 1-deoxy-D-xylulose 5-phosphate: step 5/6. Functionally, converts 2C-methyl-D-erythritol 2,4-cyclodiphosphate (ME-2,4cPP) into 1-hydroxy-2-methyl-2-(E)-butenyl 4-diphosphate. The sequence is that of 4-hydroxy-3-methylbut-2-en-1-yl diphosphate synthase (ferredoxin) from Synechococcus sp. (strain JA-2-3B'a(2-13)) (Cyanobacteria bacterium Yellowstone B-Prime).